We begin with the raw amino-acid sequence, 465 residues long: Fumarate hydratase class II (465 aa).

Residues 99–101 (SGT), 130–133 (HPND), 140–142 (STN), and Thr-188 contribute to the substrate site. His-189 serves as the catalytic Proton donor/acceptor. Residue Ser-319 is part of the active site. Residues Ser-320 and 325–327 (KVN) contribute to the substrate site.

The protein belongs to the class-II fumarase/aspartase family. Fumarase subfamily. In terms of assembly, homotetramer.

It is found in the cytoplasm. It catalyses the reaction (S)-malate = fumarate + H2O. It participates in carbohydrate metabolism; tricarboxylic acid cycle; (S)-malate from fumarate: step 1/1. In terms of biological role, involved in the TCA cycle. Catalyzes the stereospecific interconversion of fumarate to L-malate. The polypeptide is Fumarate hydratase class II (Prochlorococcus marinus (strain SARG / CCMP1375 / SS120)).